We begin with the raw amino-acid sequence, 325 residues long: RNA ligase 1 (325 aa).

Mg(2+) is required as a cofactor. Mn(2+) serves as cofactor. AMPylates itself (auto-AMPylation).

It catalyses the reaction ATP + (ribonucleotide)n-3'-hydroxyl + 5'-phospho-(ribonucleotide)m = (ribonucleotide)n+m + AMP + diphosphate.. Its function is as follows. Functions as an RNA ligase, in vitro. The ligation reaction entails three nucleotidyl transfer steps. In the first step, the RNA ligase reacts with ATP in the absence of nucleic acid to form a covalent ligase-AMP intermediate and release pyrophosphate. In step 2, the ligase-AMP binds to the nucleic acid and transfers the adenylate to the 5'-PO4 terminus to form an adenylylated intermediate. In step 3, the RNA ligase directs the attack of the 3'-OH on the 5'-phosphoanhydride linkage, resulting in a repaired 3'-5' phosphodiester and release of AMP. Exhibits selectivity for single-stranded RNA substrates and may not have nick-sealing activity on double-stranded DNA-RNA hybrids. May play a role in maintaining RNA integrity under stress conditions, for example in response to reactive oxygen species (ROS). This is RNA ligase 1 from Danio rerio (Zebrafish).